The primary structure comprises 292 residues: Bifunctional protein FolD (292 aa).

Residues 169–171 (GRS) and serine 194 each bind NADP(+).

This sequence belongs to the tetrahydrofolate dehydrogenase/cyclohydrolase family. Homodimer.

It carries out the reaction (6R)-5,10-methylene-5,6,7,8-tetrahydrofolate + NADP(+) = (6R)-5,10-methenyltetrahydrofolate + NADPH. The catalysed reaction is (6R)-5,10-methenyltetrahydrofolate + H2O = (6R)-10-formyltetrahydrofolate + H(+). The protein operates within one-carbon metabolism; tetrahydrofolate interconversion. In terms of biological role, catalyzes the oxidation of 5,10-methylenetetrahydrofolate to 5,10-methenyltetrahydrofolate and then the hydrolysis of 5,10-methenyltetrahydrofolate to 10-formyltetrahydrofolate. This Nostoc punctiforme (strain ATCC 29133 / PCC 73102) protein is Bifunctional protein FolD.